The chain runs to 243 residues: 1-(5-phosphoribosyl)-5-[(5-phosphoribosylamino)methylideneamino] imidazole-4-carboxamide isomerase (243 aa).

Aspartate 8 acts as the Proton acceptor in catalysis. The active-site Proton donor is the aspartate 130.

Belongs to the HisA/HisF family.

The protein localises to the cytoplasm. The enzyme catalyses 1-(5-phospho-beta-D-ribosyl)-5-[(5-phospho-beta-D-ribosylamino)methylideneamino]imidazole-4-carboxamide = 5-[(5-phospho-1-deoxy-D-ribulos-1-ylimino)methylamino]-1-(5-phospho-beta-D-ribosyl)imidazole-4-carboxamide. It functions in the pathway amino-acid biosynthesis; L-histidine biosynthesis; L-histidine from 5-phospho-alpha-D-ribose 1-diphosphate: step 4/9. The sequence is that of 1-(5-phosphoribosyl)-5-[(5-phosphoribosylamino)methylideneamino] imidazole-4-carboxamide isomerase from Methylococcus capsulatus (strain ATCC 33009 / NCIMB 11132 / Bath).